Consider the following 565-residue polypeptide: DNA repair protein RAD7 (565 aa).

2 disordered regions span residues methionine 1–alanine 22 and tryptophan 41–glutamate 68. A hydrophilic region spans residues methionine 1–aspartate 200. Over residues lysine 47–aspartate 62 the composition is skewed to basic and acidic residues. A phosphoserine mark is found at serine 64 and serine 85. The interval alanine 105–arginine 137 is disordered. Positions serine 115–alanine 127 are enriched in polar residues.

The protein to S.pombe SpCC613.14. Component of the global genome repair (GGR) complex composed of at least ABF1, RAD7 and RAD16. Interacts with ELC1.

Its function is as follows. Component of the global genome repair (GGR) complex which promotes global genome nucleotide excision repair (GG-NER) which removes DNA damage from nontranscribing DNA. This protein is one of 10 proteins (RAD1, 2,3,4,7,10,14, 16,23 and MMS19) involved in excision repair of DNA damaged with UV light, bulky adducts, or cross-linking agents. The polypeptide is DNA repair protein RAD7 (RAD7) (Saccharomyces cerevisiae (strain ATCC 204508 / S288c) (Baker's yeast)).